Consider the following 347-residue polypeptide: Protein RecA (347 aa).

Residue 65–72 (GPESSGKT) participates in ATP binding. The tract at residues 328 to 347 (SPAQPEAPAAGEKPEQEEEF) is disordered.

The protein belongs to the RecA family.

Its subcellular location is the cytoplasm. Its function is as follows. Can catalyze the hydrolysis of ATP in the presence of single-stranded DNA, the ATP-dependent uptake of single-stranded DNA by duplex DNA, and the ATP-dependent hybridization of homologous single-stranded DNAs. It interacts with LexA causing its activation and leading to its autocatalytic cleavage. This Vibrio parahaemolyticus serotype O3:K6 (strain RIMD 2210633) protein is Protein RecA.